A 33-amino-acid chain; its full sequence is Dermonecrotic toxin LbSicTox-alphaIB1b (33 aa).

Residue His-11 is part of the active site. Mg(2+) contacts are provided by Glu-31 and Asp-33.

This sequence belongs to the arthropod phospholipase D family. Class II subfamily. Mg(2+) serves as cofactor. Post-translationally, contains 2 disulfide bonds. As to expression, expressed by the venom gland.

The protein localises to the secreted. It carries out the reaction an N-(acyl)-sphingosylphosphocholine = an N-(acyl)-sphingosyl-1,3-cyclic phosphate + choline. The enzyme catalyses an N-(acyl)-sphingosylphosphoethanolamine = an N-(acyl)-sphingosyl-1,3-cyclic phosphate + ethanolamine. It catalyses the reaction a 1-acyl-sn-glycero-3-phosphocholine = a 1-acyl-sn-glycero-2,3-cyclic phosphate + choline. The catalysed reaction is a 1-acyl-sn-glycero-3-phosphoethanolamine = a 1-acyl-sn-glycero-2,3-cyclic phosphate + ethanolamine. Functionally, dermonecrotic toxins cleave the phosphodiester linkage between the phosphate and headgroup of certain phospholipids (sphingolipid and lysolipid substrates), forming an alcohol (often choline) and a cyclic phosphate. This toxin acts on sphingomyelin (SM) with high activity (9.5 U/mg). It may also act on ceramide phosphoethanolamine (CPE), lysophosphatidylcholine (LPC) and lysophosphatidylethanolamine (LPE), but not on lysophosphatidylserine (LPS), and lysophosphatidylglycerol (LPG). It acts by transphosphatidylation, releasing exclusively cyclic phosphate products as second products. Induces dermonecrosis, hemolysis, increased vascular permeability, edema, inflammatory response, and platelet aggregation. This Loxosceles boneti (North American fiddleback spider) protein is Dermonecrotic toxin LbSicTox-alphaIB1b.